The following is a 612-amino-acid chain: Dihydroxy-acid dehydratase (612 aa).

Asp-81 contributes to the Mg(2+) binding site. Cys-122 is a [2Fe-2S] cluster binding site. Residues Asp-123 and Lys-124 each contribute to the Mg(2+) site. Lys-124 is modified (N6-carboxylysine). Residue Cys-196 coordinates [2Fe-2S] cluster. Glu-492 contributes to the Mg(2+) binding site. Residue Ser-518 is the Proton acceptor of the active site.

This sequence belongs to the IlvD/Edd family. Homodimer. It depends on [2Fe-2S] cluster as a cofactor. Mg(2+) is required as a cofactor.

It carries out the reaction (2R)-2,3-dihydroxy-3-methylbutanoate = 3-methyl-2-oxobutanoate + H2O. The catalysed reaction is (2R,3R)-2,3-dihydroxy-3-methylpentanoate = (S)-3-methyl-2-oxopentanoate + H2O. It functions in the pathway amino-acid biosynthesis; L-isoleucine biosynthesis; L-isoleucine from 2-oxobutanoate: step 3/4. Its pathway is amino-acid biosynthesis; L-valine biosynthesis; L-valine from pyruvate: step 3/4. Functionally, functions in the biosynthesis of branched-chain amino acids. Catalyzes the dehydration of (2R,3R)-2,3-dihydroxy-3-methylpentanoate (2,3-dihydroxy-3-methylvalerate) into 2-oxo-3-methylpentanoate (2-oxo-3-methylvalerate) and of (2R)-2,3-dihydroxy-3-methylbutanoate (2,3-dihydroxyisovalerate) into 2-oxo-3-methylbutanoate (2-oxoisovalerate), the penultimate precursor to L-isoleucine and L-valine, respectively. In Paracoccus denitrificans (strain Pd 1222), this protein is Dihydroxy-acid dehydratase.